Consider the following 474-residue polypeptide: Citrate synthase, mitochondrial (474 aa).

A mitochondrion-targeting transit peptide spans 1 to 35; that stretch reads MASTLRLSTSALRSSTLAGKPVVQSVAFNGLRCYS. Catalysis depends on residues His-310, His-356, and Asp-411.

This sequence belongs to the citrate synthase family.

It localises to the mitochondrion matrix. It carries out the reaction oxaloacetate + acetyl-CoA + H2O = citrate + CoA + H(+). The protein operates within carbohydrate metabolism; tricarboxylic acid cycle; isocitrate from oxaloacetate: step 1/2. The protein is Citrate synthase, mitochondrial (citA) of Emericella nidulans (strain FGSC A4 / ATCC 38163 / CBS 112.46 / NRRL 194 / M139) (Aspergillus nidulans).